Reading from the N-terminus, the 419-residue chain is Protein arginine N-methyltransferase 8-B (419 aa).

Residues methionine 1–arginine 14 show a composition bias toward basic residues. The segment at methionine 1–alanine 79 is disordered. Residue glycine 2 is the site of N-myristoyl glycine attachment. The span at glutamine 33 to histidine 63 shows a compositional bias: low complexity. At arginine 83 the chain carries Omega-N-methylarginine. Arginine 98 is modified (asymmetric dimethylarginine). Positions arginine 98–aspartate 402 constitute an SAM-dependent MTase PRMT-type domain. S-adenosyl-L-methionine-binding positions include histidine 111, arginine 120, glycine 144, glycine 144–threonine 147, glutamate 166, and glutamate 195. Catalysis depends on residues glutamate 210 and glutamate 219.

This sequence belongs to the class I-like SAM-binding methyltransferase superfamily. Protein arginine N-methyltransferase family. PRMT8 subfamily. Homodimer. Tetramer; individual homodimers associates to form a homotetramer. Homooctamer; individual homodimers associates to form a homooctamer and homooligomerization is required for proper localization to the cell membrane.

The protein resides in the cell membrane. It carries out the reaction L-arginyl-[protein] + S-adenosyl-L-methionine = N(omega)-methyl-L-arginyl-[protein] + S-adenosyl-L-homocysteine + H(+). The enzyme catalyses L-arginyl-[protein] + 2 S-adenosyl-L-methionine = N(omega),N(omega)-dimethyl-L-arginyl-[protein] + 2 S-adenosyl-L-homocysteine + 2 H(+). S-adenosyl-L-methionine-dependent and membrane-associated arginine methyltransferase that can both catalyze the formation of omega-N monomethylarginine (MMA) and asymmetrical dimethylarginine (aDMA). In Danio rerio (Zebrafish), this protein is Protein arginine N-methyltransferase 8-B (prmt8b).